The sequence spans 220 residues: Deoxyribose-phosphate aldolase (220 aa).

D89 (proton donor/acceptor) is an active-site residue. The active-site Schiff-base intermediate with acetaldehyde is K151. Catalysis depends on K180, which acts as the Proton donor/acceptor.

Belongs to the DeoC/FbaB aldolase family. DeoC type 1 subfamily.

It is found in the cytoplasm. It carries out the reaction 2-deoxy-D-ribose 5-phosphate = D-glyceraldehyde 3-phosphate + acetaldehyde. Its pathway is carbohydrate degradation; 2-deoxy-D-ribose 1-phosphate degradation; D-glyceraldehyde 3-phosphate and acetaldehyde from 2-deoxy-alpha-D-ribose 1-phosphate: step 2/2. Its function is as follows. Catalyzes a reversible aldol reaction between acetaldehyde and D-glyceraldehyde 3-phosphate to generate 2-deoxy-D-ribose 5-phosphate. This Streptococcus pneumoniae serotype 19F (strain G54) protein is Deoxyribose-phosphate aldolase.